The chain runs to 256 residues: UPF0246 protein Swoo_1284 (256 aa).

It belongs to the UPF0246 family.

The sequence is that of UPF0246 protein Swoo_1284 from Shewanella woodyi (strain ATCC 51908 / MS32).